Reading from the N-terminus, the 45-residue chain is uncharacterized protein (45 aa).

The protein belongs to the asfivirus C62L family.

This is an uncharacterized protein from Ornithodoros (relapsing fever ticks).